The following is a 430-amino-acid chain: Histidine--tRNA ligase (430 aa).

It belongs to the class-II aminoacyl-tRNA synthetase family. Homodimer.

It localises to the cytoplasm. The enzyme catalyses tRNA(His) + L-histidine + ATP = L-histidyl-tRNA(His) + AMP + diphosphate + H(+). The chain is Histidine--tRNA ligase from Chlorobium luteolum (strain DSM 273 / BCRC 81028 / 2530) (Pelodictyon luteolum).